The following is a 115-amino-acid chain: UPF0102 protein NGO_1987 (115 aa).

This sequence belongs to the UPF0102 family.

This chain is UPF0102 protein NGO_1987, found in Neisseria gonorrhoeae (strain ATCC 700825 / FA 1090).